Reading from the N-terminus, the 984-residue chain is Mineralocorticoid receptor (984 aa).

The interval methionine 1 to isoleucine 602 is modulating. A compositionally biased stretch (polar residues) spans glutamine 231–asparagine 243. 2 disordered regions span residues glutamine 231–threonine 329 and glycine 347–proline 373. 5 positions are modified to phosphoserine: serine 250, serine 259, serine 283, serine 287, and serine 299. Residues serine 259–valine 291 are compositionally biased toward low complexity. Over residues threonine 292–threonine 329 the composition is skewed to polar residues. Positions 603, 606, 620, 623, 639, 645, 655, and 658 each coordinate Zn(2+). 2 NR C4-type zinc fingers span residues cysteine 603–cysteine 623 and cysteine 639–cysteine 663. The segment at residues cysteine 603 to methionine 668 is a DNA-binding region (nuclear receptor). The interval asparagine 669–proline 725 is hinge. Residues isoleucine 684–tyrosine 710 form a disordered region. A compositionally biased stretch (pro residues) spans glutamine 692 to serine 703. Positions glutamine 726–isoleucine 964 constitute an NR LBD domain. 21-hydroxyprogesterone contacts are provided by asparagine 770 and glutamine 776. Residues asparagine 770 and glutamine 776 each contribute to the aldosterone site. Progesterone is bound by residues asparagine 770 and glutamine 776. Residues lysine 782 to lysine 785 form an important for coactivator binding region. Arginine 817 and threonine 945 together coordinate 21-hydroxyprogesterone. Arginine 817 and threonine 945 together coordinate aldosterone. The progesterone site is built by arginine 817 and threonine 945.

It belongs to the nuclear hormone receptor family. NR3 subfamily. As to quaternary structure, heteromultimeric cytoplasmic complex with HSP90, HSP70, and FKBP4, in the absence of ligand. After ligand binding, it translocates to the nucleus and binds to DNA as a homodimer and as a heterodimer with NR3C1. May interact with HSD11B2 in the absence of ligand. Binds the coactivators NCOA1, NCOA2, TIF1 and NRIP1. Post-translationally, phosphorylated. Ubiquitous. Highly expressed in distal tubules, convoluted tubules and cortical collecting duct in kidney, and in sweat glands. Detected at lower levels in cardiomyocytes, in epidermis and in colon enterocytes.

It is found in the cytoplasm. The protein resides in the nucleus. It localises to the endoplasmic reticulum membrane. In terms of biological role, receptor for both mineralocorticoids (MC) such as aldosterone and glucocorticoids (GC) such as corticosterone or cortisol. Binds to mineralocorticoid response elements (MRE) and transactivates target genes. The effect of MC is to increase ion and water transport and thus raise extracellular fluid volume and blood pressure and lower potassium levels. This chain is Mineralocorticoid receptor (NR3C2), found in Homo sapiens (Human).